A 303-amino-acid polypeptide reads, in one-letter code: Probable cell division protein WhiA (303 aa).

A DNA-binding region (H-T-H motif) is located at residues 272-303; that stretch reads SIQQIADSIEPPLTKSGVNHRLRKINKIADDL.

The protein belongs to the WhiA family.

Its function is as follows. Involved in cell division and chromosome segregation. The polypeptide is Probable cell division protein WhiA (Streptococcus thermophilus (strain ATCC BAA-250 / LMG 18311)).